Reading from the N-terminus, the 616-residue chain is Probable galacturonosyltransferase 4 (616 aa).

The Cytoplasmic segment spans residues 1–6; the sequence is MMVKLR. A helical; Signal-anchor for type II membrane protein membrane pass occupies residues 7–29; the sequence is NLVLFFMLLTVVAHILLYTDPAA. At 30-616 the chain is on the lumenal side; the sequence is SFKTPFSKRD…VYLRECNINP (587 aa). Residues 132-152 form a disordered region; that stretch reads QTSEKVDEQPEPNAFGAKKDT. Residues asparagine 291, asparagine 326, asparagine 378, asparagine 481, and asparagine 514 are each glycosylated (N-linked (GlcNAc...) asparagine).

This sequence belongs to the glycosyltransferase 8 family. As to expression, expressed in roots, inflorescences, siliques, leaves and stems.

The protein resides in the golgi apparatus membrane. It participates in glycan metabolism; pectin biosynthesis. In terms of biological role, may be involved in pectin and/or xylans biosynthesis in cell walls. The sequence is that of Probable galacturonosyltransferase 4 (GAUT4) from Arabidopsis thaliana (Mouse-ear cress).